The primary structure comprises 259 residues: Hemin import ATP-binding protein HmuV (259 aa).

The ABC transporter domain occupies 2-238 (IEARDLNVSI…ALLSEVFDCQ (237 aa)). 34-41 (GPNGSGKS) contributes to the ATP binding site.

The protein belongs to the ABC transporter superfamily. Heme (hemin) importer (TC 3.A.1.14.5) family. The complex is composed of two ATP-binding proteins (HmuV), two transmembrane proteins (HmuU) and a solute-binding protein (HmuT).

The protein resides in the cell inner membrane. In terms of biological role, part of the ABC transporter complex HmuTUV involved in hemin import. Responsible for energy coupling to the transport system. The chain is Hemin import ATP-binding protein HmuV from Chelativorans sp. (strain BNC1).